The primary structure comprises 123 residues: Holo-[acyl-carrier-protein] synthase (123 aa).

Positions 9 and 57 each coordinate Mg(2+).

This sequence belongs to the P-Pant transferase superfamily. AcpS family. Requires Mg(2+) as cofactor.

It localises to the cytoplasm. The enzyme catalyses apo-[ACP] + CoA = holo-[ACP] + adenosine 3',5'-bisphosphate + H(+). Functionally, transfers the 4'-phosphopantetheine moiety from coenzyme A to a Ser of acyl-carrier-protein. The polypeptide is Holo-[acyl-carrier-protein] synthase (Streptomyces avermitilis (strain ATCC 31267 / DSM 46492 / JCM 5070 / NBRC 14893 / NCIMB 12804 / NRRL 8165 / MA-4680)).